The primary structure comprises 422 residues: Cell division protein DivIB (422 aa).

2 stretches are compositionally biased toward basic and acidic residues: residues 1–23 and 62–75; these read MVDWDKEAQRFRQRRQEAEKQEE and EEAKGEDFAKDQEQ. Residues 1-77 form a disordered region; the sequence is MVDWDKEAQR…DFAKDQEQKH (77 aa). Topologically, residues 1 to 109 are cytoplasmic; the sequence is MVDWDKEAQR…LQLKSVSWSR (109 aa). Residues 110 to 130 traverse the membrane as a helical segment; that stretch reads LILAAAFLFMIIFSAFWLSPL. A POTRA domain is found at 131-202; the sequence is NRIATIEVSG…RTVEVNVQEF (72 aa). Residues 131–422 are Extracellular-facing; the sequence is NRIATIEVSG…TVTQTRSSNS (292 aa). Residues 329–422 are disordered; it reads NPLNDPFASP…TVTQTRSSNS (94 aa). Residues 338–379 are compositionally biased toward basic and acidic residues; it reads PEEKASYQEKVDQAKEKSKEKQAKADKHSSESKLGDKPKPRG. Residues 389–422 are compositionally biased toward low complexity; the sequence is TSSQRQTSSQSSPRPGTNSSQQSSTVTQTRSSNS.

Belongs to the FtsQ/DivIB family. DivIB subfamily.

It is found in the cell membrane. In terms of biological role, cell division protein that may be involved in stabilizing or promoting the assembly of the division complex. The sequence is that of Cell division protein DivIB from Aerococcus urinae (strain CCUG 59500 / ACS-120-V-Col10a).